The chain runs to 239 residues: Ribonuclease 3 (239 aa).

Residues 18 to 141 (YLTLEKALGY…LMAGVYLEAG (124 aa)) enclose the RNase III domain. Glutamate 54 is a Mg(2+) binding site. The active site involves aspartate 58. Positions 127 and 130 each coordinate Mg(2+). Glutamate 130 is a catalytic residue. The DRBM domain maps to 168–237 (DYKTALQELT…AYQALQKLKE (70 aa)).

The protein belongs to the ribonuclease III family. Homodimer. Mg(2+) is required as a cofactor.

It is found in the cytoplasm. It carries out the reaction Endonucleolytic cleavage to 5'-phosphomonoester.. Functionally, digests double-stranded RNA. Involved in the processing of primary rRNA transcript to yield the immediate precursors to the large and small rRNAs (23S and 16S). Processes some mRNAs, and tRNAs when they are encoded in the rRNA operon. Processes pre-crRNA and tracrRNA of type II CRISPR loci if present in the organism. The chain is Ribonuclease 3 from Helicobacter pylori (strain P12).